Consider the following 232-residue polypeptide: LexA repressor (232 aa).

The H-T-H motif DNA-binding region spans 36-56; that stretch reads IREIGDAAGLQSTSSVAYQLK. Over residues 62-86 the composition is skewed to basic and acidic residues; it reads GFLRRDPNKPRAVDVRHLPETDNRT. The tract at residues 62 to 107 is disordered; that stretch reads GFLRRDPNKPRAVDVRHLPETDNRTKAGPKAKARPTAGASPQPELA. Active-site for autocatalytic cleavage activity residues include Ser-156 and Lys-193.

This sequence belongs to the peptidase S24 family. As to quaternary structure, homodimer.

The catalysed reaction is Hydrolysis of Ala-|-Gly bond in repressor LexA.. Its function is as follows. Represses a number of genes involved in the response to DNA damage (SOS response), including recA and lexA. In the presence of single-stranded DNA, RecA interacts with LexA causing an autocatalytic cleavage which disrupts the DNA-binding part of LexA, leading to derepression of the SOS regulon and eventually DNA repair. This is LexA repressor from Corynebacterium efficiens (strain DSM 44549 / YS-314 / AJ 12310 / JCM 11189 / NBRC 100395).